Here is a 76-residue protein sequence, read N- to C-terminus: ATP synthase subunit c (76 aa).

Transmembrane regions (helical) follow at residues 13-33 (LSVI…GILF) and 55-75 (FIGL…ALII).

The protein belongs to the ATPase C chain family. As to quaternary structure, F-type ATPases have 2 components, F(1) - the catalytic core - and F(0) - the membrane proton channel. F(1) has five subunits: alpha(3), beta(3), gamma(1), delta(1), epsilon(1). F(0) has three main subunits: a(1), b(2) and c(10-14). The alpha and beta chains form an alternating ring which encloses part of the gamma chain. F(1) is attached to F(0) by a central stalk formed by the gamma and epsilon chains, while a peripheral stalk is formed by the delta and b chains.

It localises to the cell membrane. In terms of biological role, f(1)F(0) ATP synthase produces ATP from ADP in the presence of a proton or sodium gradient. F-type ATPases consist of two structural domains, F(1) containing the extramembraneous catalytic core and F(0) containing the membrane proton channel, linked together by a central stalk and a peripheral stalk. During catalysis, ATP synthesis in the catalytic domain of F(1) is coupled via a rotary mechanism of the central stalk subunits to proton translocation. Key component of the F(0) channel; it plays a direct role in translocation across the membrane. A homomeric c-ring of between 10-14 subunits forms the central stalk rotor element with the F(1) delta and epsilon subunits. This chain is ATP synthase subunit c, found in Bifidobacterium longum subsp. infantis (strain ATCC 15697 / DSM 20088 / JCM 1222 / NCTC 11817 / S12).